A 321-amino-acid polypeptide reads, in one-letter code: Ribose-phosphate pyrophosphokinase 2 (321 aa).

Mg(2+) is bound by residues aspartate 130, histidine 132, and aspartate 145. Serine 172 carries the post-translational modification Phosphoserine.

The protein belongs to the ribose-phosphate pyrophosphokinase family.

Its subcellular location is the cytoplasm. The catalysed reaction is D-ribose 5-phosphate + ATP = 5-phospho-alpha-D-ribose 1-diphosphate + AMP + H(+). It participates in metabolic intermediate biosynthesis; 5-phospho-alpha-D-ribose 1-diphosphate biosynthesis; 5-phospho-alpha-D-ribose 1-diphosphate from D-ribose 5-phosphate (route I): step 1/1. 5-phosphoribose 1-diphosphate synthase involved in nucleotide, histidine, and tryptophan biosynthesis. Active in heteromultimeric complexes with other 5-phosphoribose 1-diphosphate synthases. This Schizosaccharomyces pombe (strain 972 / ATCC 24843) (Fission yeast) protein is Ribose-phosphate pyrophosphokinase 2.